The chain runs to 269 residues: Phosphonoacetaldehyde hydrolase (269 aa).

Asp10 serves as the catalytic Nucleophile. Residues Asp10 and Ala12 each contribute to the Mg(2+) site. Lys52 (schiff-base intermediate with substrate) is an active-site residue. Asp186 provides a ligand contact to Mg(2+).

It belongs to the HAD-like hydrolase superfamily. PhnX family. As to quaternary structure, homodimer. Mg(2+) serves as cofactor.

It carries out the reaction phosphonoacetaldehyde + H2O = acetaldehyde + phosphate + H(+). In terms of biological role, involved in phosphonate degradation. This is Phosphonoacetaldehyde hydrolase from Klebsiella pneumoniae subsp. pneumoniae (strain ATCC 700721 / MGH 78578).